Reading from the N-terminus, the 438-residue chain is Ubiquitin carboxyl-terminal hydrolase 27 (438 aa).

Residues Arg78–Gln421 enclose the USP domain. Cys87 serves as the catalytic Nucleophile. Residue His380 is the Proton acceptor of the active site.

It belongs to the peptidase C19 family. Interacts with phosphorylated BCL2L11 isoform BIMEL; this interaction leads to BCL2L11 deubiquitination and stabilization.

The protein resides in the cytoplasm. It is found in the cytosol. The protein localises to the nucleus. The enzyme catalyses Thiol-dependent hydrolysis of ester, thioester, amide, peptide and isopeptide bonds formed by the C-terminal Gly of ubiquitin (a 76-residue protein attached to proteins as an intracellular targeting signal).. Deubiquitinase involved in innate antiviral immunity by mediating deubiquitination of CGAS and RIGI. Negatively regulates RIGI by mediating 'Lys-63'-linked deubiquitination of RIGI, inhibiting type I interferon signaling. Also regulates 'Lys-63'-linked ubiquitination level of MDA5/IFIH1. Acts as a positive regulator of the cGAS-STING pathway by catalyzing 'Lys-48'-linked deubiquitination of CGAS, thereby promoting its stabilization. Can reduce the levels of BCL2L11/BIM ubiquitination and stabilize BCL2L11 in response to the RAF-MAPK-degradation signal. By acting on BCL2L11 levels, may counteract the anti-apoptotic effects of MAPK activity. The protein is Ubiquitin carboxyl-terminal hydrolase 27 of Mus musculus (Mouse).